The sequence spans 592 residues: BRCA1-associated protein (592 aa).

Phosphoserine is present on S52. The interval 78–124 (KSNPDELKTTVEERKSSEASPTAQRSKDHSKECINAAPDSPSKQLPD) is disordered. Over residues 80-94 (NPDELKTTVEERKSS) the composition is skewed to basic and acidic residues. S97, S117, and S119 each carry phosphoserine. The RING-type zinc-finger motif lies at 264–304 (CTVCLERMDESVNGILTTLCNHSFHSQCLQRWDDTTCPVCR). The UBP-type; degenerate zinc-finger motif lies at 301 to 393 (PVCRYCQTPE…GKIVQYECEG (93 aa)). Zn(2+) contacts are provided by C317, C320, C329, C332, C337, H344, H348, and H354. Residues 429-537 (RIEKDTAEEI…EIQEQLRDVM (109 aa)) are a coiled coil. A disordered region spans residues 565-592 (AMASASSPASSGGSGKLPSRKGRSKRGK). Basic residues predominate over residues 582 to 592 (PSRKGRSKRGK).

Interacts with the nuclear localization signal of BRCA1 and with the N-terminal of KSR1. The C-terminal portion of BCRA1 interacts with DDB1. In terms of tissue distribution, expressed in breast epithelial cell lines.

Its subcellular location is the cytoplasm. It catalyses the reaction S-ubiquitinyl-[E2 ubiquitin-conjugating enzyme]-L-cysteine + [acceptor protein]-L-lysine = [E2 ubiquitin-conjugating enzyme]-L-cysteine + N(6)-ubiquitinyl-[acceptor protein]-L-lysine.. It participates in protein modification; protein ubiquitination. In terms of biological role, negatively regulates MAP kinase activation by limiting the formation of Raf/MEK complexes probably by inactivation of the KSR1 scaffold protein. Also acts as a Ras responsive E3 ubiquitin ligase that, on activation of Ras, is modified by auto-polyubiquitination resulting in the release of inhibition of Raf/MEK complex formation. May also act as a cytoplasmic retention protein with a role in regulating nuclear transport. This Homo sapiens (Human) protein is BRCA1-associated protein.